Reading from the N-terminus, the 40-residue chain is Large ribosomal subunit protein bL36A (40 aa).

It belongs to the bacterial ribosomal protein bL36 family.

This chain is Large ribosomal subunit protein bL36A, found in Saccharopolyspora erythraea (strain ATCC 11635 / DSM 40517 / JCM 4748 / NBRC 13426 / NCIMB 8594 / NRRL 2338).